The primary structure comprises 286 residues: Probable endonuclease 4 (286 aa).

His-71, His-111, Glu-147, Asp-181, His-184, His-218, Asp-231, His-233, and Glu-263 together coordinate Zn(2+).

The protein belongs to the AP endonuclease 2 family. It depends on Zn(2+) as a cofactor.

It carries out the reaction Endonucleolytic cleavage to 5'-phosphooligonucleotide end-products.. In terms of biological role, endonuclease IV plays a role in DNA repair. It cleaves phosphodiester bonds at apurinic or apyrimidinic (AP) sites, generating a 3'-hydroxyl group and a 5'-terminal sugar phosphate. This Vibrio cholerae serotype O1 (strain ATCC 39541 / Classical Ogawa 395 / O395) protein is Probable endonuclease 4.